Consider the following 163-residue polypeptide: 3-isopropylmalate dehydratase small subunit (163 aa).

The protein belongs to the LeuD family. LeuD type 2 subfamily. Heterodimer of LeuC and LeuD.

It carries out the reaction (2R,3S)-3-isopropylmalate = (2S)-2-isopropylmalate. It functions in the pathway amino-acid biosynthesis; L-leucine biosynthesis; L-leucine from 3-methyl-2-oxobutanoate: step 2/4. In terms of biological role, catalyzes the isomerization between 2-isopropylmalate and 3-isopropylmalate, via the formation of 2-isopropylmaleate. The sequence is that of 3-isopropylmalate dehydratase small subunit from Clostridioides difficile (strain 630) (Peptoclostridium difficile).